The primary structure comprises 775 residues: Glutamine--tRNA ligase (775 aa).

Ala-2 carries the N-acetylalanine modification. Ser-70 bears the Phosphoserine mark. ATP is bound by residues 271-273 (EPN) and 277-283 (HIGHAKA). Asp-303 is an L-glutamine binding site. Position 309 is an N6-acetyllysine (Lys-309). Tyr-438 is an L-glutamine binding site. Residues Thr-457, 486-487 (RL), and 494-496 (VSK) contribute to the ATP site. The residue at position 495 (Ser-495) is a Phosphoserine.

It belongs to the class-I aminoacyl-tRNA synthetase family. As to quaternary structure, monomer. Part of a multisubunit complex that groups tRNA ligases for Arg (RARS1), Asp (DARS1), Gln (QARS1), Ile (IARS1), Leu (LARS1), Lys (KARS1), Met (MARS1) the bifunctional ligase for Glu and Pro (EPRS1) and the auxiliary subunits AIMP1/p43, AIMP2/p38 and EEF1E1/p18. Interacts with RARS1. Part of a complex composed of RARS1, QARS1 and AIMP1. Detected in dorsal root ganglia (at protein level). Detected in dorsal root ganglia.

The protein resides in the cytoplasm. It localises to the cytosol. The enzyme catalyses tRNA(Gln) + L-glutamine + ATP = L-glutaminyl-tRNA(Gln) + AMP + diphosphate. Its function is as follows. Glutamine--tRNA ligase. Plays a critical role in brain development. The chain is Glutamine--tRNA ligase (Qars1) from Rattus norvegicus (Rat).